A 358-amino-acid polypeptide reads, in one-letter code: MAVKWTGGHSSSILCLNANKDGLVASGGEGGDLVAWGEDGTPLGHMQLEGADDVTSVLFSASCPTKLYASHGETISVLDVRSLKGSLDHFHVNEEEINCLSLNETESLLASADDSGAIKILDLEKKKVTRSLKRHSNICSSVAFRPQRPQSLVSCGLDMQVMLWSLQKARPVWITNLQEDETEETEGPQTPGRLLNPALAHSVSVASCGNIFSCGAEDGKVRIFRVMGVKCERELGFKGHTLGVSQVCFLPESSLLLTGGNDGRIRLWDVSGKMEKLQKSPARHIHRKKAKRAACPTQGGNSRAPGAEDEGHAKILPKLDIEHGEKVNWLLSTKIKGNKSILVADQTSCVSVYPLNEL.

WD repeat units lie at residues G8–Q47, V92–S131, R134–I174, L195–E234, and G239–Q278. Residues K288–D309 are disordered.

Belongs to the WD repeat WDR53 family.

The sequence is that of WD repeat-containing protein 53 (Wdr53) from Mus musculus (Mouse).